A 224-amino-acid polypeptide reads, in one-letter code: UPF0758 protein Rpic_2712 (224 aa).

One can recognise an MPN domain in the interval 102–224; sequence TFESAQSVKD…VYGFLEHGKM (123 aa). Residues His-173, His-175, and Asp-186 each coordinate Zn(2+). Positions 173–186 match the JAMM motif motif; it reads HNHPTGNTEPSESD.

The protein belongs to the UPF0758 family.

The protein is UPF0758 protein Rpic_2712 of Ralstonia pickettii (strain 12J).